A 373-amino-acid chain; its full sequence is Beta sliding clamp homolog GriR (373 aa).

It belongs to the beta sliding clamp family. Forms a ring-shaped head-to-tail homodimer around DNA which binds and tethers DNA polymerases and other proteins to the DNA. The DNA replisome complex has a single clamp-loading complex (3 tau and 1 each of delta, delta', psi and chi subunits) which binds 3 Pol III cores (1 core on the leading strand and 2 on the lagging strand) each with a beta sliding clamp dimer. Additional proteins in the replisome are other copies of gamma, psi and chi, Ssb, DNA helicase and RNA primase.

The protein resides in the cytoplasm. In terms of biological role, a homolog of the beta sliding clamp protein encoded within the biosynthetic cluster for griselimycin synthesis. Upon expression in S.coelicolor A3(2), which is susceptible to this antibiotic, confers resistance to griselimycin. The beta sliding clamp confers DNA tethering and processivity to DNA polymerases and other proteins. Acts as a clamp, forming a ring around DNA (a reaction catalyzed by the clamp-loading complex) which diffuses in an ATP-independent manner freely and bidirectionally along dsDNA. Initially characterized for its ability to contact the catalytic subunit of DNA polymerase III (Pol III), a complex, multichain enzyme responsible for most of the replicative synthesis in bacteria; Pol III exhibits 3'-5' exonuclease proofreading activity. The beta chain is required for initiation of replication as well as for processivity of DNA replication. The sequence is that of Beta sliding clamp homolog GriR from Streptomyces muensis.